We begin with the raw amino-acid sequence, 495 residues long: AAA-ATPase At2g18193 (495 aa).

Residues 7-28 (FSFSPSSLFSAYASLTGFLMLF) form a helical membrane-spanning segment. 250-257 (GPPGTGKS) is an ATP binding site. The interval 451-495 (EVSICKATDDDEKQNGSLGCVKKKKKGGKQKGKGKGKGKAKTYLI) is disordered. Positions 471–495 (VKKKKKGGKQKGKGKGKGKAKTYLI) are enriched in basic residues.

It belongs to the AAA ATPase family. BCS1 subfamily. Mg(2+) is required as a cofactor.

The protein resides in the membrane. The catalysed reaction is ATP + H2O = ADP + phosphate + H(+). The chain is AAA-ATPase At2g18193 from Arabidopsis thaliana (Mouse-ear cress).